A 382-amino-acid polypeptide reads, in one-letter code: Queuine tRNA-ribosyltransferase (382 aa).

The active-site Proton acceptor is the Asp93. Residues 93–97 (DSGGF), Asp147, Gln191, and Gly218 contribute to the substrate site. The RNA binding stretch occupies residues 249 to 255 (GVGKPED). The active-site Nucleophile is Asp268. Residues 273–277 (TRNAR) form an RNA binding; important for wobble base 34 recognition region. Residues Cys306, Cys308, Cys311, and His337 each coordinate Zn(2+).

It belongs to the queuine tRNA-ribosyltransferase family. In terms of assembly, homodimer. Within each dimer, one monomer is responsible for RNA recognition and catalysis, while the other monomer binds to the replacement base PreQ1. The cofactor is Zn(2+).

The catalysed reaction is 7-aminomethyl-7-carbaguanine + guanosine(34) in tRNA = 7-aminomethyl-7-carbaguanosine(34) in tRNA + guanine. Its pathway is tRNA modification; tRNA-queuosine biosynthesis. Catalyzes the base-exchange of a guanine (G) residue with the queuine precursor 7-aminomethyl-7-deazaguanine (PreQ1) at position 34 (anticodon wobble position) in tRNAs with GU(N) anticodons (tRNA-Asp, -Asn, -His and -Tyr). Catalysis occurs through a double-displacement mechanism. The nucleophile active site attacks the C1' of nucleotide 34 to detach the guanine base from the RNA, forming a covalent enzyme-RNA intermediate. The proton acceptor active site deprotonates the incoming PreQ1, allowing a nucleophilic attack on the C1' of the ribose to form the product. After dissociation, two additional enzymatic reactions on the tRNA convert PreQ1 to queuine (Q), resulting in the hypermodified nucleoside queuosine (7-(((4,5-cis-dihydroxy-2-cyclopenten-1-yl)amino)methyl)-7-deazaguanosine). The chain is Queuine tRNA-ribosyltransferase from Actinobacillus pleuropneumoniae serotype 3 (strain JL03).